Reading from the N-terminus, the 272-residue chain is Iodotyrosine deiodinase (272 aa).

The chain crosses the membrane as a helical span at residues 5 to 25 (LSGVSYGLLAGILAMLIHLVY). FMN is bound by residues 82–86 (RRSVR), S110, and 110–111 (SG). The 3-iodo-L-tyrosine site is built by A112, E139, Y143, and K164. Residues 219 to 221 (TST) and R261 each bind FMN.

It belongs to the nitroreductase family. FMN is required as a cofactor.

The protein resides in the membrane. It carries out the reaction 2 iodide + L-tyrosine + 2 NADP(+) = 3,5-diiodo-L-tyrosine + 2 NADPH + H(+). The enzyme catalyses iodide + L-tyrosine + NADP(+) = 3-iodo-L-tyrosine + NADPH. The catalysed reaction is 3-iodo-L-tyrosine + iodide + NADP(+) = 3,5-diiodo-L-tyrosine + NADPH + H(+). It catalyses the reaction L-tyrosine + chloride + NADP(+) = 3-chloro-L-tyrosine + NADPH. It carries out the reaction bromide + L-tyrosine + NADP(+) = 3-bromo-L-tyrosine + NADPH. Catalyzes the dehalogenation of halotyrosines such as 3,5-diiodo-L-tyrosine. Likely to also catalyze the dehalogenation of other halotyrosines such as 3-bromo-L-tyrosine, 3-chloro-L-tyrosine and 3-iodo-L-tyrosine. The chain is Iodotyrosine deiodinase from Hydra vulgaris (Hydra).